The sequence spans 310 residues: Acetaldehyde dehydrogenase 1 (310 aa).

12 to 15 (SGNI) is an NAD(+) binding site. The active-site Acyl-thioester intermediate is C127. NAD(+) is bound by residues 163-171 (SAGPGTRAN) and N282.

Belongs to the acetaldehyde dehydrogenase family.

It catalyses the reaction acetaldehyde + NAD(+) + CoA = acetyl-CoA + NADH + H(+). The polypeptide is Acetaldehyde dehydrogenase 1 (Mycobacterium sp. (strain KMS)).